Reading from the N-terminus, the 466-residue chain is Argininosuccinate lyase (466 aa).

Belongs to the lyase 1 family. Argininosuccinate lyase subfamily.

Its subcellular location is the cytoplasm. It carries out the reaction 2-(N(omega)-L-arginino)succinate = fumarate + L-arginine. The protein operates within amino-acid biosynthesis; L-arginine biosynthesis; L-arginine from L-ornithine and carbamoyl phosphate: step 3/3. The protein is Argininosuccinate lyase of Microcystis aeruginosa (strain NIES-843 / IAM M-2473).